Here is a 130-residue protein sequence, read N- to C-terminus: Small ribosomal subunit protein uS9 (130 aa).

The protein belongs to the universal ribosomal protein uS9 family.

The sequence is that of Small ribosomal subunit protein uS9 from Burkholderia pseudomallei (strain K96243).